The chain runs to 75 residues: UPF0352 protein ESA_01049 (75 aa).

It belongs to the UPF0352 family.

The polypeptide is UPF0352 protein ESA_01049 (Cronobacter sakazakii (strain ATCC BAA-894) (Enterobacter sakazakii)).